Consider the following 29-residue polypeptide: Potassium channel toxin alpha-KTx 8.3 (29 aa).

Intrachain disulfides connect Cys3–Cys19, Cys6–Cys24, and Cys10–Cys26.

This sequence belongs to the short scorpion toxin superfamily. Potassium channel inhibitor family. Alpha-KTx 08 subfamily. Expressed by the venom gland.

It is found in the secreted. Functionally, specific and potent inhibitor of ClC-2/CLCN2 chloride channel. It slows ClC-2/CLCN2 activation by increasing the latency to first opening by nearly 8-fold but is unable to inhibit open channels, suggesting that this toxin inhibits channel activation gating. The protein is Potassium channel toxin alpha-KTx 8.3 of Leiurus hebraeus (Hebrew deathstalker scorpion).